We begin with the raw amino-acid sequence, 73 residues long: Protein SlyX homolog (73 aa).

This sequence belongs to the SlyX family.

In Haemophilus ducreyi (strain 35000HP / ATCC 700724), this protein is Protein SlyX homolog.